The primary structure comprises 497 residues: Probable cytosol aminopeptidase (497 aa).

2 residues coordinate Mn(2+): lysine 267 and aspartate 272. The active site involves lysine 279. Mn(2+) contacts are provided by aspartate 290, aspartate 349, and glutamate 351. Arginine 353 is an active-site residue.

The protein belongs to the peptidase M17 family. Requires Mn(2+) as cofactor.

The protein resides in the cytoplasm. The catalysed reaction is Release of an N-terminal amino acid, Xaa-|-Yaa-, in which Xaa is preferably Leu, but may be other amino acids including Pro although not Arg or Lys, and Yaa may be Pro. Amino acid amides and methyl esters are also readily hydrolyzed, but rates on arylamides are exceedingly low.. It carries out the reaction Release of an N-terminal amino acid, preferentially leucine, but not glutamic or aspartic acids.. Its function is as follows. Presumably involved in the processing and regular turnover of intracellular proteins. Catalyzes the removal of unsubstituted N-terminal amino acids from various peptides. This Pseudomonas putida (strain ATCC 47054 / DSM 6125 / CFBP 8728 / NCIMB 11950 / KT2440) protein is Probable cytosol aminopeptidase.